The sequence spans 909 residues: Protein translocase subunit SecA (909 aa).

Residues Gln-87 and Gly-105–Thr-109 each bind ATP. The tract at residues Leu-246 to Ile-265 is disordered. Over residues Glu-254–Ile-265 the composition is skewed to basic and acidic residues. An ATP-binding site is contributed by Asp-512. Over residues Glu-834–Thr-858 the composition is skewed to basic and acidic residues. Residues Glu-834–Leu-899 are disordered. Over residues Ala-859–Ala-875 the composition is skewed to low complexity. Zn(2+) is bound by residues Cys-893, Cys-895, Cys-904, and His-905.

The protein belongs to the SecA family. In terms of assembly, monomer and homodimer. Part of the essential Sec protein translocation apparatus which comprises SecA, SecYEG and auxiliary proteins SecDF-YajC and YidC. Requires Zn(2+) as cofactor.

It localises to the cell inner membrane. It is found in the cytoplasm. It catalyses the reaction ATP + H2O + cellular proteinSide 1 = ADP + phosphate + cellular proteinSide 2.. Part of the Sec protein translocase complex. Interacts with the SecYEG preprotein conducting channel. Has a central role in coupling the hydrolysis of ATP to the transfer of proteins into and across the cell membrane, serving both as a receptor for the preprotein-SecB complex and as an ATP-driven molecular motor driving the stepwise translocation of polypeptide chains across the membrane. The protein is Protein translocase subunit SecA of Pseudoalteromonas atlantica (strain T6c / ATCC BAA-1087).